The primary structure comprises 497 residues: Probable gamma-aminobutyrate transaminase 2, mitochondrial (497 aa).

A mitochondrion-targeting transit peptide spans 1-37 (MNLIKHAAFAASFQGETDCTSHASARKFSTSGSSPLL). Residue 153 to 154 (GS) participates in pyridoxal 5'-phosphate binding. Y186 is a substrate binding site. A pyridoxal 5'-phosphate-binding site is contributed by D293. K322 is a substrate binding site. Residue K322 is modified to N6-(pyridoxal phosphate)lysine.

Belongs to the class-III pyridoxal-phosphate-dependent aminotransferase family.

The protein resides in the mitochondrion. It catalyses the reaction 4-aminobutanoate + pyruvate = succinate semialdehyde + L-alanine. It carries out the reaction 4-aminobutanoate + glyoxylate = succinate semialdehyde + glycine. Functionally, transaminase that degrades gamma-amino butyric acid (GABA). This chain is Probable gamma-aminobutyrate transaminase 2, mitochondrial, found in Oryza sativa subsp. indica (Rice).